Reading from the N-terminus, the 135-residue chain is Fluoride-specific ion channel FluC 2 (135 aa).

Transmembrane regions (helical) follow at residues 5–25, 36–56, 68–88, and 100–120; these read VLAA…GLLA, WGTV…METL, PFLG…ITDA, and ALLA…AAAG. Residues Gly-76 and Thr-79 each contribute to the Na(+) site.

The protein belongs to the fluoride channel Fluc/FEX (TC 1.A.43) family.

It is found in the cell membrane. It catalyses the reaction fluoride(in) = fluoride(out). Its activity is regulated as follows. Na(+) is not transported, but it plays an essential structural role and its presence is essential for fluoride channel function. Fluoride-specific ion channel. Important for reducing fluoride concentration in the cell, thus reducing its toxicity. This chain is Fluoride-specific ion channel FluC 2, found in Thermobifida fusca (strain YX).